Reading from the N-terminus, the 317-residue chain is Protease HtpX homolog (317 aa).

The next 2 membrane-spanning stretches (helical) occupy residues 14–34 (LMGIAIFAIGFGIIYAILYYI) and 41–61 (IALLMVLLPIFIIMDIVQWLF). Position 146 (histidine 146) interacts with Zn(2+). The active site involves glutamate 147. Residue histidine 150 coordinates Zn(2+). Transmembrane regions (helical) follow at residues 158–178 (MLLAIGLIPTLIFYFGYTLLF) and 189–209 (IVLLAIIAMAASFLFRFLILA). Glutamate 215 contacts Zn(2+).

Belongs to the peptidase M48B family. The cofactor is Zn(2+).

The protein localises to the cell membrane. The protein is Protease HtpX homolog of Thermoplasma acidophilum (strain ATCC 25905 / DSM 1728 / JCM 9062 / NBRC 15155 / AMRC-C165).